Here is a 300-residue protein sequence, read N- to C-terminus: Inosose dehydratase (300 aa).

Belongs to the IolE/MocC family. Glutathione is required as a cofactor. Co(2+) serves as cofactor. It depends on Mn(2+) as a cofactor.

The catalysed reaction is scyllo-inosose = 3D-3,5/4-trihydroxycyclohexane-1,2-dione + H2O. It functions in the pathway polyol metabolism; myo-inositol degradation into acetyl-CoA; acetyl-CoA from myo-inositol: step 2/7. Catalyzes the dehydration of inosose (2-keto-myo-inositol, 2KMI or 2,4,6/3,5-pentahydroxycyclohexanone) to 3D-(3,5/4)-trihydroxycyclohexane-1,2-dione (D-2,3-diketo-4-deoxy-epi-inositol). The sequence is that of Inosose dehydratase from Lactiplantibacillus plantarum (strain ATCC BAA-793 / NCIMB 8826 / WCFS1) (Lactobacillus plantarum).